Reading from the N-terminus, the 107-residue chain is Putative double-stranded DNA mimic protein Spro_2690 (107 aa).

The protein belongs to the putative dsDNA mimic protein family.

Its function is as follows. May act as a double-stranded DNA (dsDNA) mimic. Probably regulates the activity of a dsDNA-binding protein. The sequence is that of Putative double-stranded DNA mimic protein Spro_2690 from Serratia proteamaculans (strain 568).